Here is a 219-residue protein sequence, read N- to C-terminus: Alpha N-terminal protein methyltransferase 1 (219 aa).

Residues glycine 64, arginine 69, 111–112, and glutamine 127 each bind S-adenosyl-L-methionine; that span reads LQ.

This sequence belongs to the methyltransferase superfamily. NTM1 family.

Its subcellular location is the cytoplasm. It carries out the reaction N-terminal L-alanyl-L-prolyl-L-lysyl-[protein] + 3 S-adenosyl-L-methionine = N-terminal N,N,N-trimethyl-L-alanyl-L-prolyl-L-lysyl-[protein] + 3 S-adenosyl-L-homocysteine + 3 H(+). The enzyme catalyses N-terminal L-seryl-L-prolyl-L-lysyl-[protein] + 3 S-adenosyl-L-methionine = N-terminal N,N,N-trimethyl-L-seryl-L-prolyl-L-lysyl-[protein] + 3 S-adenosyl-L-homocysteine + 3 H(+). It catalyses the reaction N-terminal L-prolyl-L-prolyl-L-lysyl-[protein] + 2 S-adenosyl-L-methionine = N-terminal N,N-dimethyl-L-prolyl-L-prolyl-L-lysyl-[protein] + 2 S-adenosyl-L-homocysteine + 2 H(+). Alpha-N-methyltransferase that methylates the N-terminus of target proteins containing the N-terminal motif [Ala/Pro/Ser]-Pro-Lys when the initiator Met is cleaved. Specifically catalyzes mono-, di- or tri-methylation of exposed alpha-amino group of Ala or Ser residue in the [Ala/Ser]-Pro-Lys motif and mono- or di-methylation of Pro in the Pro-Pro-Lys motif. In Schizosaccharomyces pombe (strain 972 / ATCC 24843) (Fission yeast), this protein is Alpha N-terminal protein methyltransferase 1 (tae1).